Consider the following 490-residue polypeptide: Membrane-bound lytic murein transglycosylase F (490 aa).

The signal sequence occupies residues 1–32 (MFALTAYRLRCAAWLLATGIFLLLAGCSEAKA). The interval 33-269 (PTALERVQKE…RLKDRYYGHV (237 aa)) is non-LT domain. Positions 270 to 490 (DVLGYVGAYT…PDDDEGDGKL (221 aa)) are LT domain. The active site involves glutamate 316. Residues 467-490 (AESGLHLPGVNKTRPDDDEGDGKL) form a disordered region.

In the N-terminal section; belongs to the bacterial solute-binding protein 3 family. The protein in the C-terminal section; belongs to the transglycosylase Slt family.

It is found in the cell outer membrane. It carries out the reaction Exolytic cleavage of the (1-&gt;4)-beta-glycosidic linkage between N-acetylmuramic acid (MurNAc) and N-acetylglucosamine (GlcNAc) residues in peptidoglycan, from either the reducing or the non-reducing ends of the peptidoglycan chains, with concomitant formation of a 1,6-anhydrobond in the MurNAc residue.. Its function is as follows. Murein-degrading enzyme that degrades murein glycan strands and insoluble, high-molecular weight murein sacculi, with the concomitant formation of a 1,6-anhydromuramoyl product. Lytic transglycosylases (LTs) play an integral role in the metabolism of the peptidoglycan (PG) sacculus. Their lytic action creates space within the PG sacculus to allow for its expansion as well as for the insertion of various structures such as secretion systems and flagella. This Pseudomonas paraeruginosa (strain DSM 24068 / PA7) (Pseudomonas aeruginosa (strain PA7)) protein is Membrane-bound lytic murein transglycosylase F.